A 339-amino-acid polypeptide reads, in one-letter code: Purple acid phosphatase 4 (339 aa).

A signal peptide spans 1–31 (MSSKFDIGSLSIVMTLLICFLLLSLAPKLEA). Asp53 is a Fe cation binding site. Residue Asn61 is glycosylated (N-linked (GlcNAc...) asparagine). Residues Asp86 and Tyr89 each coordinate Fe cation. Asp86 contacts Zn(2+). Zn(2+)-binding residues include Asn124 and His218. His227 (proton donor) is an active-site residue. His253 serves as a coordination point for Zn(2+). Residue 253 to 255 (HDH) coordinates substrate. His255 provides a ligand contact to Fe cation. Asn284 carries an N-linked (GlcNAc...) asparagine glycan.

It belongs to the metallophosphoesterase superfamily. Purple acid phosphatase family. Homodimer. Fe cation is required as a cofactor. It depends on Zn(2+) as a cofactor. In terms of tissue distribution, expressed in roots, stems, leaves, flowers and siliques.

It is found in the secreted. It carries out the reaction a phosphate monoester + H2O = an alcohol + phosphate. This Arabidopsis thaliana (Mouse-ear cress) protein is Purple acid phosphatase 4 (PAP4).